Reading from the N-terminus, the 290-residue chain is MCLAGCTPRKAAAPGRGALPRARLPRTAPAAATMFQPAAKRGFTIESLVAKDGGTGGGTGGGGAGSHLLAAAASEEPLRPTALNYPHPSAAEAAFVSGFPAAAAAGAGRSLYGGPELVFPEAMNHPALTVHPAHQLGASPLQPPHSFFGAQHRDPLHFYPWVLRNRFFGHRFQASDVPQDGLLLHGPFARKPKRIRTAFSPSQLLRLERAFEKNHYVVGAERKQLAGSLSLSETQVKVWFQNRRTKYKRQKLEEEGPESEQKKKGSHHINRWRIATKQANGEDIDVTSND.

Positions 192 to 251 (PKRIRTAFSPSQLLRLERAFEKNHYVVGAERKQLAGSLSLSETQVKVWFQNRRTKYKRQK) form a DNA-binding region, homeobox. The interval 249–290 (RQKLEEEGPESEQKKKGSHHINRWRIATKQANGEDIDVTSND) is disordered. Over residues 250–263 (QKLEEEGPESEQKK) the composition is skewed to basic and acidic residues.

This sequence belongs to the EMX homeobox family. Interacts with WRD11 (via the N-terminal and the central portion of the protein); the interaction associates EMX1 with GLI3. In terms of tissue distribution, cerebral cortex.

Its subcellular location is the nucleus. It localises to the cytoplasm. Functionally, transcription factor, which in cooperation with EMX2, acts to generate the boundary between the roof and archipallium in the developing brain. May function in combinations with OTX1/2 to specify cell fates in the developing central nervous system. The sequence is that of Homeobox protein EMX1 from Homo sapiens (Human).